The sequence spans 142 residues: MAKKVDGYIKLQVAAGAANPSPPVGPALGQKGVNIMEFCKAFNARTEKFDKGMPIPVVITVYTDRSFTFETKTPPASFLLLKAAGLKSGSGRPNTDKVGTIKRSAVQEIAETKAADMTGADMDAMMRSIEGTARSMGLVVED.

This sequence belongs to the universal ribosomal protein uL11 family. As to quaternary structure, part of the ribosomal stalk of the 50S ribosomal subunit. Interacts with L10 and the large rRNA to form the base of the stalk. L10 forms an elongated spine to which L12 dimers bind in a sequential fashion forming a multimeric L10(L12)X complex. In terms of processing, one or more lysine residues are methylated.

Functionally, forms part of the ribosomal stalk which helps the ribosome interact with GTP-bound translation factors. This Shewanella piezotolerans (strain WP3 / JCM 13877) protein is Large ribosomal subunit protein uL11.